We begin with the raw amino-acid sequence, 262 residues long: Small ribosomal subunit protein uS3 (262 aa).

A KH type-2 domain is found at 38–106; sequence LRKIIAKELE…KVKLNIQEIH (69 aa). The interval 211-262 is disordered; the sequence is KGQTQLPQPAVAAARPGLTVEEEERPQRKGGRGGRGANAGAARGGRGGRSRS. Positions 243-255 are enriched in gly residues; sequence GGRGANAGAARGG.

It belongs to the universal ribosomal protein uS3 family. In terms of assembly, part of the 30S ribosomal subunit. Forms a tight complex with proteins S10 and S14.

Binds the lower part of the 30S subunit head. Binds mRNA in the 70S ribosome, positioning it for translation. This is Small ribosomal subunit protein uS3 from Roseiflexus sp. (strain RS-1).